We begin with the raw amino-acid sequence, 216 residues long: Large ribosomal subunit protein uL1 (216 aa).

Belongs to the universal ribosomal protein uL1 family.

This chain is Large ribosomal subunit protein uL1, found in Caenorhabditis elegans.